The primary structure comprises 367 residues: Pentatricopeptide repeat-containing protein At1g11900 (367 aa).

PPR repeat units lie at residues 69 to 103 (SKID…NICL), 104 to 139 (PISV…GKEP), 141 to 175 (SSDC…SLPY), 176 to 210 (RLIV…ECKP), 211 to 241 (DVIT…MKED), 247 to 281 (NIIT…GIEP), 282 to 316 (DLLS…QIRP), and 317 to 347 (SVYV…LKNT).

This sequence belongs to the PPR family. P subfamily.

The chain is Pentatricopeptide repeat-containing protein At1g11900 from Arabidopsis thaliana (Mouse-ear cress).